The following is a 380-amino-acid chain: Cytochrome b (380 aa).

Helical transmembrane passes span Phe-34 to Thr-54, Trp-78 to Ile-99, Trp-114 to Leu-134, and Phe-179 to Thr-199. Residues His-84 and His-98 each coordinate heme b. Heme b is bound by residues His-183 and His-197. Residue His-202 participates in a ubiquinone binding. 4 consecutive transmembrane segments (helical) span residues Leu-227–Ser-247, Leu-289–His-309, Phe-321–Ser-341, and Phe-348–Pro-368.

This sequence belongs to the cytochrome b family. As to quaternary structure, the cytochrome bc1 complex contains 11 subunits: 3 respiratory subunits (MT-CYB, CYC1 and UQCRFS1), 2 core proteins (UQCRC1 and UQCRC2) and 6 low-molecular weight proteins (UQCRH/QCR6, UQCRB/QCR7, UQCRQ/QCR8, UQCR10/QCR9, UQCR11/QCR10 and a cleavage product of UQCRFS1). This cytochrome bc1 complex then forms a dimer. Requires heme b as cofactor.

It localises to the mitochondrion inner membrane. In terms of biological role, component of the ubiquinol-cytochrome c reductase complex (complex III or cytochrome b-c1 complex) that is part of the mitochondrial respiratory chain. The b-c1 complex mediates electron transfer from ubiquinol to cytochrome c. Contributes to the generation of a proton gradient across the mitochondrial membrane that is then used for ATP synthesis. This chain is Cytochrome b (MT-CYB), found in Garrodia nereis (Grey-backed storm-petrel).